A 282-amino-acid chain; its full sequence is 2-dehydro-3-deoxyphosphooctonate aldolase (282 aa).

It belongs to the KdsA family.

The protein localises to the cytoplasm. The enzyme catalyses D-arabinose 5-phosphate + phosphoenolpyruvate + H2O = 3-deoxy-alpha-D-manno-2-octulosonate-8-phosphate + phosphate. Its pathway is carbohydrate biosynthesis; 3-deoxy-D-manno-octulosonate biosynthesis; 3-deoxy-D-manno-octulosonate from D-ribulose 5-phosphate: step 2/3. It participates in bacterial outer membrane biogenesis; lipopolysaccharide biosynthesis. This chain is 2-dehydro-3-deoxyphosphooctonate aldolase, found in Shewanella halifaxensis (strain HAW-EB4).